The chain runs to 264 residues: Major prion protein (264 aa).

An N-terminal signal peptide occupies residues 1 to 24 (MVKRHIGSWILVLFVVMWSDVGLC). The interaction with GRB2, ERI3 and SYN1 stretch occupies residues 25-241 (KKRPKPGGGW…ESQAYYQRGA (217 aa)). A disordered region spans residues 27 to 119 (RPKPGGGWNT…WNKPSKPKTN (93 aa)). 6 consecutive repeat copies span residues 54-62 (SQGGGGWGQ), 63-70 (PHGGGWGQ), 71-78 (PHGGGWGQ), 79-86 (PHGGGWGQ), 87-94 (PHGGGWGQ), and 95-103 (PHGGGGWGQ). The segment at 54-103 (SQGGGGWGQPHGGGWGQPHGGGWGQPHGGGWGQPHGGGWGQPHGGGGWGQ) is 6 X 8 AA tandem repeats of P-H-G-G-G-W-G-Q. Over residues 55–105 (QGGGGWGQPHGGGWGQPHGGGWGQPHGGGWGQPHGGGWGQPHGGGGWGQGG) the composition is skewed to gly residues. His-72, Gly-73, Gly-74, His-80, Gly-81, Gly-82, His-88, Gly-89, Gly-90, His-96, Gly-98, and Gly-99 together coordinate Cu(2+). A disulfide bridge links Cys-190 with Cys-225. Residues Asn-192 and Asn-208 are each glycosylated (N-linked (GlcNAc...) asparagine). Ala-241 carries GPI-anchor amidated alanine lipidation. Residues 242-264 (SVILFSSPPVILLISLLIFLIVG) constitute a propeptide, removed in mature form.

This sequence belongs to the prion family. As to quaternary structure, monomer and homodimer. Has a tendency to aggregate into amyloid fibrils containing a cross-beta spine, formed by a steric zipper of superposed beta-strands. Soluble oligomers may represent an intermediate stage on the path to fibril formation. Copper binding may promote oligomerization. Interacts with GRB2, APP, ERI3/PRNPIP and SYN1. Mislocalized cytosolically exposed PrP interacts with MGRN1; this interaction alters MGRN1 subcellular location and causes lysosomal enlargement. Interacts with KIAA1191.

The protein resides in the cell membrane. It localises to the golgi apparatus. In terms of biological role, its primary physiological function is unclear. Has cytoprotective activity against internal or environmental stresses. May play a role in neuronal development and synaptic plasticity. May be required for neuronal myelin sheath maintenance. May play a role in iron uptake and iron homeostasis. Soluble oligomers are toxic to cultured neuroblastoma cells and induce apoptosis (in vitro). Association with GPC1 (via its heparan sulfate chains) targets PRNP to lipid rafts. Also provides Cu(2+) or Zn(2+) for the ascorbate-mediated GPC1 deaminase degradation of its heparan sulfate side chains. This chain is Major prion protein (PRNP), found in Bubalus bubalis (Domestic water buffalo).